The following is a 594-amino-acid chain: Zinc finger protein 703 (594 aa).

Residues 1–14 (MSDSPAGSNPRTPE) are compositionally biased toward polar residues. Disordered stretches follow at residues 1–37 (MSDSPAGSNPRTPESSGSGGGSSSGGGGGKRPAVPAV), 100–298 (TCSQ…GHVA), and 345–370 (LVGGQLSGGLGLPPGKPPSSSPLTGA). N-acetylserine is present on S2. Over residues 17–30 (GSGGGSSSGGGGGK) the composition is skewed to gly residues. Low complexity-rich tracts occupy residues 134–145 (RSAPGAASAAAA), 177–191 (GSSSVSSTTSSSSSS), and 212–225 (GASVSTSSNSSSPG). Basic and acidic residues predominate over residues 246–256 (ELDKKEQEAKP). S257 carries the phosphoserine modification. The span at 345–356 (LVGGQLSGGLGL) shows a compositional bias: gly residues. The segment at 460–488 (HSCNWVAASGPCDKRFATSEELLSHLRTH) adopts a C2H2-type zinc-finger fold. Position 584 is an omega-N-methylarginine (R584).

This sequence belongs to the Elbow/Noc family. In terms of assembly, interacts with DCAF7 and PHB2. Interacts with TLE4; increases transcriptional repression. In terms of tissue distribution, expressed in mammary epithelium.

It is found in the nucleus. It localises to the cytoplasm. Functionally, transcriptional corepressor which does not bind directly to DNA and may regulate transcription through recruitment of histone deacetylases to gene promoters. Regulates cell adhesion, migration and proliferation. May be required for segmental gene expression during hindbrain development. This Mus musculus (Mouse) protein is Zinc finger protein 703 (Znf703).